The chain runs to 260 residues: 3'-5' ssDNA/RNA exonuclease TatD (260 aa).

Glutamate 92, histidine 128, and histidine 153 together coordinate a divalent metal cation.

Belongs to the metallo-dependent hydrolases superfamily. TatD-type hydrolase family. TatD subfamily. Monomer. Mg(2+) serves as cofactor.

The protein localises to the cytoplasm. 3'-5' exonuclease that prefers single-stranded DNA and RNA. May play a role in the H(2)O(2)-induced DNA damage repair. The chain is 3'-5' ssDNA/RNA exonuclease TatD from Pantoea vagans (strain C9-1) (Pantoea agglomerans (strain C9-1)).